A 428-amino-acid polypeptide reads, in one-letter code: MHDIRAIRENPEAFDRDLERRGLAPLSAELIALDDVRKGAVSAAQAAQERRNALSKEIGAAKKAKDEARATELMAEVARLKEEAPGLEAAQGEAAKALDERLAAIPNRPKDDVPPGADEHGNVEYRRFDSSRERLTQGRQHFELGEATGLMDFEAAAKLSGSRFVVLKGQLARLERALGQFMLDLHTGEHGYTEVVPPVLVREEAMFGTAQLPKFRDDQFAAGENFWLIPTAEVPLTNLVRESILAEDELPLRFTALTPCFRAEAGAAGRDTRGMLRQHQFNKVELVSITAPEKSAEEHERMLACAEAVLQKLDLTYRVMTLCTGDMGFASQKTYDIEVWVPGQQTYREISSCSVCGEFQARRMNARYRAKEGRGVGFVHTLNGSGVAVGRALIAVMENYQNPDGSVTIPSALQPYMGGLTRIEGPKN.

231–233 (TAE) contacts L-serine. 262-264 (RAE) is an ATP binding site. An L-serine-binding site is contributed by Glu-285. 349 to 352 (EISS) contacts ATP. Residue Ser-385 participates in L-serine binding.

The protein belongs to the class-II aminoacyl-tRNA synthetase family. Type-1 seryl-tRNA synthetase subfamily. As to quaternary structure, homodimer. The tRNA molecule binds across the dimer.

It is found in the cytoplasm. It catalyses the reaction tRNA(Ser) + L-serine + ATP = L-seryl-tRNA(Ser) + AMP + diphosphate + H(+). The enzyme catalyses tRNA(Sec) + L-serine + ATP = L-seryl-tRNA(Sec) + AMP + diphosphate + H(+). The protein operates within aminoacyl-tRNA biosynthesis; selenocysteinyl-tRNA(Sec) biosynthesis; L-seryl-tRNA(Sec) from L-serine and tRNA(Sec): step 1/1. Functionally, catalyzes the attachment of serine to tRNA(Ser). Is also able to aminoacylate tRNA(Sec) with serine, to form the misacylated tRNA L-seryl-tRNA(Sec), which will be further converted into selenocysteinyl-tRNA(Sec). This chain is Serine--tRNA ligase, found in Methylorubrum extorquens (strain CM4 / NCIMB 13688) (Methylobacterium extorquens).